Here is a 93-residue protein sequence, read N- to C-terminus: MSRSIKKPPFCAPHVLRLVNKAVAQNKLNSIINIHSRSSVILNKFIGLTFGVYNGKTYVPVKVNDNMVGRKFGEFSPTRRYTGHVGDKKVSRK.

Belongs to the universal ribosomal protein uS19 family.

Protein S19 forms a complex with S13 that binds strongly to the 16S ribosomal RNA. The sequence is that of Small ribosomal subunit protein uS19 from Ehrlichia canis (strain Jake).